The chain runs to 312 residues: Olfactory receptor 14C36 (312 aa).

Residues 1–23 (MPNSTTVMEFLLMRFSDVWTLQI) are Extracellular-facing. N-linked (GlcNAc...) asparagine glycosylation occurs at N3. A helical membrane pass occupies residues 24 to 44 (LHSASFFMLYLVTLMGNILIV). Residues 45–52 (TVTTCDSS) are Cytoplasmic-facing. A helical membrane pass occupies residues 53–73 (LHMPMYFFLRNLSILDACYIS). Over 74-97 (VTVPTSCVNSLLDSTTISKAGCVA) the chain is Extracellular. A disulfide bond links C95 and C187. The helical transmembrane segment at 98-118 (QVFLVVFFVYVELLFLTIMAH) threads the bilayer. Over 119 to 137 (DRYVAVCQPLHYPVIVNSR) the chain is Cytoplasmic. A helical membrane pass occupies residues 138–158 (ICIQMTLASLLSGLVYAGMHT). Residues 159–194 (GSTFQLPFCRSNVIHQFFCDIPSLLKLSCSDTFSNE) are Extracellular-facing. A helical transmembrane segment spans residues 195-215 (VMIVVSALGVGGGCFIFIIRS). The Cytoplasmic portion of the chain corresponds to 216–235 (YIHIFSTVLGFPRGADRTKA). A helical membrane pass occupies residues 236 to 256 (FSTCIPHILVVSVFLSSCSSV). Residues 257–269 (YLRPPAIPAATQD) lie on the Extracellular side of the membrane. Residues 270 to 290 (LILSGFYSIMPPLFNPIIYSL) traverse the membrane as a helical segment. Over 291–312 (RNKQIKVAIKKIMKRIFYSENV) the chain is Cytoplasmic.

Belongs to the G-protein coupled receptor 1 family.

The protein resides in the cell membrane. Its function is as follows. Odorant receptor. The polypeptide is Olfactory receptor 14C36 (OR14C36) (Homo sapiens (Human)).